A 357-amino-acid polypeptide reads, in one-letter code: Protein ATP1B4 (357 aa).

Over 1-110 (MRRQLRSRRA…FLARTGQSWS (110 aa)) the chain is Nuclear. The tract at residues 15-80 (YSYRYRLDDP…EEGQGQPTGN (66 aa)) is disordered. The segment covering 52-73 (EEEEEEEEKEEEEEEEKEEEEG) has biased composition (acidic residues). Residues 111 to 131 (LILLIYFFFYASLAAVITLCM) form a helical; Signal-anchor for type II membrane protein membrane-spanning segment. Topologically, residues 132–357 (YTLFLTISPY…RVIFTLNIET (226 aa)) are perinuclear space.

The protein belongs to the X(+)/potassium ATPases subunit beta family. Associates with a SMAD7-transcriptional complex. Interacts with SNW1 and TOR1AIP1. According to PubMed:17592128, does not associate with known Na,K-ATPase alpha-subunits. As to expression, highly expressed in skeletal muscle and at a lower level in heart.

It localises to the nucleus inner membrane. May act as a transcriptional coregulator during muscle development through its interaction with SNW1. Has lost its ancestral function as a Na,K-ATPase beta-subunit. This chain is Protein ATP1B4 (ATP1B4), found in Homo sapiens (Human).